The following is a 1021-amino-acid chain: Inversin (1021 aa).

16 ANK repeats span residues 7–36 (QNPS…LRDS), 40–69 (FGRT…GINK), 73–102 (SQRT…DWRL), 106–137 (EEMT…EVDT), 141–170 (NKQT…NIGI), 174–206 (EGKI…TESL), 213–243 (EGRT…SVTA), 247–276 (LFRT…SGMI), 281–310 (QGAT…VRDE), 314–343 (EGRT…DIDI), 349–378 (YGGT…MVDP), 382–411 (MKHT…RVDL), 415–444 (DGHS…SPNL), 448–477 (AGRT…DPNI), 481–510 (EGRT…FPNH), and 516–546 (ERYT…SIAA). The D-box 1 signature appears at 483-491 (RTALHWSCN). Residues 548 to 577 (QDIAASSIQALYKGYKVRRAFRERKKLLMR) enclose the IQ 1 domain. Basic and acidic residues-rich tracts occupy residues 579 to 598 (EQLR…REAE) and 653 to 669 (SRRE…REPE). 3 disordered regions span residues 579-602 (EQLR…QQLS), 632-691 (KDSV…KKCP), and 704-868 (GPDT…GTCS). Over residues 722 to 731 (PAGSSRPGSA) the composition is skewed to low complexity. 2 stretches are compositionally biased toward polar residues: residues 759-781 (GAHS…TSKG) and 791-802 (TGSQPSNNTSVT). Residues 803–866 (RQKEKRQEKE…KEKEKKKDGT (64 aa)) show a composition bias toward basic and acidic residues. A D-box 2 motif is present at residues 862-870 (KKDGTCSKN). One can recognise an IQ 2 domain in the interval 869–898 (KNQAAVVIQRAWRRSCVRGRIRKVLCRSLK).

As to quaternary structure, binds calmodulin via its IQ domains.

The protein resides in the cytoplasm. It localises to the cytoskeleton. Its function is as follows. Required for normal renal development and establishment of left-right axis. Probably acts as a molecular switch between different Wnt signaling pathways. Inhibits the canonical Wnt pathway by targeting cytoplasmic disheveled for degradation by the ubiquitin-proteasome. This suggests that it is required in renal development to oppose the repression of terminal differentiation of tubular epithelial cells by Wnt signaling. The chain is Inversin (invs) from Danio rerio (Zebrafish).